A 32-amino-acid chain; its full sequence is Cathepsin B-like cysteine proteinase (32 aa).

Residues 1–22 (KPNYKRQFEPFSDELIHYINLE) constitute a propeptide, activation peptide.

The protein belongs to the peptidase C1 family.

Thiol protease. This chain is Cathepsin B-like cysteine proteinase, found in Fasciola hepatica (Liver fluke).